The following is a 93-amino-acid chain: Cytochrome c oxidase polypeptide 6, mitochondrial (93 aa).

At 2 to 33 the chain is on the mitochondrial matrix side; the sequence is STGNESYNLRYPKGFKGYPYNMYKLEGYGTPK. A helical membrane pass occupies residues 34–53; sequence GYITLIGVVATLTVSGLFFA. Residues 54 to 93 are Mitochondrial intermembrane-facing; the sequence is KTRSNKREYPTHNKEWRAKTLAYAKETNADPIYQLPKDKI.

This sequence belongs to the cytochrome c oxidase IV family. Component of the cytochrome c oxidase (complex IV, CIV), a multisubunit enzyme composed of a catalytic core of 3 subunits and seevral supernumerary subunits. The complex exists as a monomer or a dimer and forms supercomplexes (SCs) in the inner mitochondrial membrane with ubiquinol-cytochrome c oxidoreductase (cytochrome b-c1 complex, complex III, CIII).

It is found in the mitochondrion inner membrane. Its pathway is energy metabolism; oxidative phosphorylation. Functionally, component of the cytochrome c oxidase, the last enzyme in the mitochondrial electron transport chain which drives oxidative phosphorylation. The respiratory chain contains 3 multisubunit complexes succinate dehydrogenase (complex II, CII), ubiquinol-cytochrome c oxidoreductase (cytochrome b-c1 complex, complex III, CIII) and cytochrome c oxidase (complex IV, CIV), that cooperate to transfer electrons derived from NADH and succinate to molecular oxygen, creating an electrochemical gradient over the inner membrane that drives transmembrane transport and the ATP synthase. Cytochrome c oxidase is the component of the respiratory chain that catalyzes the reduction of oxygen to water. Electrons originating from reduced cytochrome c in the intermembrane space (IMS) are transferred via the dinuclear copper A center (CU(A)) of subunit 2 and heme A of subunit 1 to the active site in subunit 1, a binuclear center (BNC) formed by heme A3 and copper B (CU(B)). The BNC reduces molecular oxygen to 2 water molecules using 4 electrons from cytochrome c in the IMS and 4 protons from the mitochondrial matrix. The protein is Cytochrome c oxidase polypeptide 6, mitochondrial (cxfA) of Dictyostelium discoideum (Social amoeba).